The primary structure comprises 106 residues: Urease subunit beta (106 aa).

The protein belongs to the urease beta subunit family. Heterotrimer of UreA (gamma), UreB (beta) and UreC (alpha) subunits. Three heterotrimers associate to form the active enzyme.

Its subcellular location is the cytoplasm. The enzyme catalyses urea + 2 H2O + H(+) = hydrogencarbonate + 2 NH4(+). It participates in nitrogen metabolism; urea degradation; CO(2) and NH(3) from urea (urease route): step 1/1. The chain is Urease subunit beta from Citrobacter koseri (strain ATCC BAA-895 / CDC 4225-83 / SGSC4696).